The primary structure comprises 203 residues: dITP/XTP pyrophosphatase (203 aa).

9-14 provides a ligand contact to substrate; the sequence is SSNAGK. Mg(2+)-binding residues include E42 and D72. The active-site Proton acceptor is D72. Substrate contacts are provided by residues S73, 161-164, K184, and 189-190; these read FGYD and HR.

Belongs to the HAM1 NTPase family. As to quaternary structure, homodimer. Mg(2+) serves as cofactor.

The catalysed reaction is XTP + H2O = XMP + diphosphate + H(+). It catalyses the reaction dITP + H2O = dIMP + diphosphate + H(+). The enzyme catalyses ITP + H2O = IMP + diphosphate + H(+). Pyrophosphatase that catalyzes the hydrolysis of nucleoside triphosphates to their monophosphate derivatives, with a high preference for the non-canonical purine nucleotides XTP (xanthosine triphosphate), dITP (deoxyinosine triphosphate) and ITP. Seems to function as a house-cleaning enzyme that removes non-canonical purine nucleotides from the nucleotide pool, thus preventing their incorporation into DNA/RNA and avoiding chromosomal lesions. This chain is dITP/XTP pyrophosphatase, found in Acidobacterium capsulatum (strain ATCC 51196 / DSM 11244 / BCRC 80197 / JCM 7670 / NBRC 15755 / NCIMB 13165 / 161).